A 664-amino-acid polypeptide reads, in one-letter code: Acid beta-fructofuranosidase 4, vacuolar (664 aa).

Topologically, residues 1 to 43 are cytoplasmic; sequence MASSDALLPISAREEEPLCPYTRLPMADPNQETHGPRRRRPFK. The propeptide at 1 to 108 is removed in mature form; it reads MASSDALLPI…WKLSGDRNTP (108 aa). Short sequence motifs (critical for endoplasmic reticulum export) lie at residues 7–8 and 9–10; these read LL and PI. The Critical for trafficking from the trans-Golgi network to the prevacuolar compartment and from the prevacuolar compartment to the central vacuole signature appears at 14–16; that stretch reads EEE. Residues 44 to 64 form a helical; Signal-anchor for type II membrane protein membrane-spanning segment; it reads GLLAVSFGLLFIAFYVALIAT. Topologically, residues 65 to 664 are lumenal; it reads HDGSRSNDEG…DEAVRALSRT (600 aa). Asn-113 is a glycosylation site (N-linked (GlcNAc...) asparagine). Residues 132 to 135, Gln-151, Trp-159, 194 to 195, and 258 to 259 each bind substrate; these read WMND, WT, and RD. Asp-135 is an active-site residue. N-linked (GlcNAc...) (complex) asparagine glycosylation is present at Asn-280. The substrate site is built by Glu-313 and Asp-346. Residues Asn-362 and Asn-498 are each glycosylated (N-linked (GlcNAc...) asparagine). The cysteines at positions 510 and 558 are disulfide-linked.

This sequence belongs to the glycosyl hydrolase 32 family. As to quaternary structure, may be present in two forms, a 70 kDa monomer and a heterodimer of the 30 kDa and 38 kDa subunits. The ratio of the levels of the two forms within cells appears to be regulated developmentally. In terms of tissue distribution, mostly expressed in stems, roots and flowers, and, to a lower extent, in mature leaves.

The protein resides in the vacuole. It localises to the endoplasmic reticulum membrane. Its subcellular location is the golgi apparatus membrane. The protein localises to the golgi apparatus. It is found in the trans-Golgi network membrane. The protein resides in the prevacuolar compartment membrane. It localises to the vacuole membrane. Its subcellular location is the vacuole lumen. The enzyme catalyses Hydrolysis of terminal non-reducing beta-D-fructofuranoside residues in beta-D-fructofuranosides.. Its pathway is glycan biosynthesis; sucrose metabolism. With respect to regulation, inhibited by C/VIF1 and C/VIF2. Possible role in the continued mobilization of sucrose to sink organs. Regulates root elongation. The polypeptide is Acid beta-fructofuranosidase 4, vacuolar (Arabidopsis thaliana (Mouse-ear cress)).